Here is a 548-residue protein sequence, read N- to C-terminus: Protein swallow (548 aa).

3 disordered regions span residues 67–109 (AKTC…GRSS), 184–206 (NCQT…SSSF), and 358–428 (FSSV…ELIS). Residues 79-91 (QEDEDDYDEDVDG) are compositionally biased toward acidic residues. Over residues 189-205 (SNSDSNYNSNSNNSSSS) the composition is skewed to low complexity. Residues Ser362 and Ser368 each carry the phosphoserine modification. Polar residues predominate over residues 388–402 (APNNSETSQPSSNDS). Positions 406–420 (VEAHEEERPSSRRQW) are enriched in basic and acidic residues. Ser463, Ser471, Ser475, Ser483, Ser485, and Ser487 each carry phosphoserine.

As to quaternary structure, may be a homo- or heterodimer.

The protein localises to the nucleus. Its function is as follows. Has a role in localizing bicoid mRNA at the anterior margin of the oocyte during oogenesis, and a poorly characterized role in nuclear divisions in early embryogenesis. In Drosophila melanogaster (Fruit fly), this protein is Protein swallow (swa).